The primary structure comprises 1052 residues: Membrane-bound transcription factor site-1 protease (1052 aa).

An N-terminal signal peptide occupies residues 1–17; sequence MKLVNIWLLLLVVLLCG. The propeptide occupies 18–186; sequence KKHLGDRLEK…TGRHSSRRLL (169 aa). Serine 168 carries the post-translational modification Phosphoserine; by FAM20C. At 187 to 998 the chain is on the lumenal side; the sequence is RAIPRQVAQT…IMPGRYNQEV (812 aa). The region spanning 190-472 is the Peptidase S8 domain; the sequence is PRQVAQTLQA…HGKLDLLRAY (283 aa). The active-site Charge relay system is aspartate 218. Asparagine 236 carries an N-linked (GlcNAc...) asparagine glycan. The active-site Charge relay system is the histidine 249. N-linked (GlcNAc...) asparagine glycosylation is present at asparagine 305. The active-site Charge relay system is serine 414. 2 N-linked (GlcNAc...) asparagine glycosylation sites follow: asparagine 515 and asparagine 728. The segment covering 877-887 has biased composition (polar residues); that stretch reads PSLSHSGNRQR. A disordered region spans residues 877–899; the sequence is PSLSHSGNRQRPPSGAGSVTPER. N-linked (GlcNAc...) asparagine glycosylation is present at asparagine 939. Residues 999 to 1021 traverse the membrane as a helical segment; it reads GQTIPVFAFLGAMVVLAFFVVQI. The Cytoplasmic segment spans residues 1022-1052; the sequence is NKAKSRPKRRKPRVKRPQLMQQVHPPKTPSV. The segment covering 1027 to 1037 has biased composition (basic residues); that stretch reads RPKRRKPRVKR. The disordered stretch occupies residues 1027–1052; sequence RPKRRKPRVKRPQLMQQVHPPKTPSV.

This sequence belongs to the peptidase S8 family. In terms of assembly, interacts with LYSET; this interaction bridges GNPTAB to MBTPS1. Ca(2+) serves as cofactor. The 148 kDa zymogen is processed progressively into two membrane-bound 120 and 106 kDa forms in the endoplasmic reticulum, and late into a secreted 98 kDa form. The propeptide is autocatalytically removed through an intramolecular cleavage after Leu-186. Further cleavage generates 14, 10, and 8 kDa intermediates. In terms of tissue distribution, widely expressed.

The protein resides in the endoplasmic reticulum membrane. The protein localises to the golgi apparatus membrane. It catalyses the reaction Processes precursors containing basic and hydrophobic/aliphatic residues at P4 and P2, respectively, with a relatively relaxed acceptance of amino acids at P1 and P3.. With respect to regulation, inhibited by divalent copper and zinc ions, but not by nickel or cobalt. Inhibited by its prosegment, but not smaller fragments. Inhibited by 4-(2-aminoethyl)benzenesulfonyl fluoride (AEBSF), a serine protease inhibitor. Serine protease that cleaves after hydrophobic or small residues, provided that Arg or Lys is in position P4: known substrates include SREBF1/SREBP1, SREBF2/SREBP2, BDNF, GNPTAB, ATF6, ATF6B and FAM20C. Cleaves substrates after Arg-Ser-Val-Leu (SREBP2), Arg-His-Leu-Leu (ATF6), Arg-Gly-Leu-Thr (BDNF) and its own propeptide after Arg-Arg-Leu-Leu. Catalyzes the first step in the proteolytic activation of the sterol regulatory element-binding proteins (SREBPs) SREBF1/SREBP1 and SREBF2/SREBP2. Also mediates the first step in the proteolytic activation of the cyclic AMP-dependent transcription factor ATF-6 (ATF6 and ATF6B). Mediates the protein cleavage of GNPTAB into subunit alpha and beta, thereby participating in biogenesis of lysosomes. Cleaves the propeptide from FAM20C which is required for FAM20C secretion from the Golgi apparatus membrane and for enhancement of FAM20C kinase activity, promoting osteoblast differentiation and biomineralization. Involved in the regulation of M6P-dependent Golgi-to-lysosome trafficking of lysosomal enzymes. It is required for the activation of CREB3L2/BBF2H7, a transcriptional activator of MIA3/TANGO and other genes controlling mega vesicle formation. Therefore, it plays a key role in the regulation of mega vesicle-mediated collagen trafficking. In astrocytes and osteoblasts, upon DNA damage and ER stress, mediates the first step of the regulated intramembrane proteolytic activation of the transcription factor CREB3L1, leading to the inhibition of cell-cycle progression. In Homo sapiens (Human), this protein is Membrane-bound transcription factor site-1 protease.